The following is a 218-amino-acid chain: MTENIVRETSKKKESPPENTWLELGKTMVTAVILAIGIRTFVAEARYIPSSSMEPTLQINDRLIIEKISYRLRDPERGEIVVFNPTDALKAKNFHDAFIKRIIGLPGDEVRVSQGNVYVNGKMLDENYIAAPPAYEYGPVKVPDDQYLVLGDNRNNSYDSHYWGFVPREKLLGRAFVRFWPVPRVGLLTDDAEREAVEISPQAWESPAISPQTVPESR.

Over M1–K26 the chain is Cytoplasmic. A helical transmembrane segment spans residues T27–A43. The Periplasmic portion of the chain corresponds to E44–R218. Residues S52 and K100 contribute to the active site.

It belongs to the peptidase S26 family.

It is found in the cell membrane. The enzyme catalyses Cleavage of hydrophobic, N-terminal signal or leader sequences from secreted and periplasmic proteins.. In Synechocystis sp. (strain ATCC 27184 / PCC 6803 / Kazusa), this protein is Probable signal peptidase I-2 (lepB2).